We begin with the raw amino-acid sequence, 126 residues long: UPF0325 protein PBPRA2971 (126 aa).

Belongs to the UPF0325 family.

The polypeptide is UPF0325 protein PBPRA2971 (Photobacterium profundum (strain SS9)).